The primary structure comprises 47 residues: Delta-ctenitoxin-Asp2e (47 aa).

Disulfide bonds link Cys-3/Cys-17, Cys-10/Cys-23, Cys-14/Cys-46, Cys-16/Cys-31, and Cys-25/Cys-29.

Expressed by the venom gland.

The protein resides in the secreted. Its function is as follows. Inhibits the inactivation of voltage-gated sodium channels (Nav). This chain is Delta-ctenitoxin-Asp2e, found in Ancylometes sp. (South American fishing spider).